The sequence spans 379 residues: Chaperone protein DnaJ (379 aa).

The J domain occupies D4–G69. A CR-type zinc finger spans residues G137–E215. The Zn(2+) site is built by C150, C153, C167, C170, C189, C192, C203, and C206. 4 CXXCXGXG motif repeats span residues C150–G157, C167–G174, C189–G196, and C203–G210.

Belongs to the DnaJ family. In terms of assembly, homodimer. It depends on Zn(2+) as a cofactor.

The protein resides in the cytoplasm. Participates actively in the response to hyperosmotic and heat shock by preventing the aggregation of stress-denatured proteins and by disaggregating proteins, also in an autonomous, DnaK-independent fashion. Unfolded proteins bind initially to DnaJ; upon interaction with the DnaJ-bound protein, DnaK hydrolyzes its bound ATP, resulting in the formation of a stable complex. GrpE releases ADP from DnaK; ATP binding to DnaK triggers the release of the substrate protein, thus completing the reaction cycle. Several rounds of ATP-dependent interactions between DnaJ, DnaK and GrpE are required for fully efficient folding. Also involved, together with DnaK and GrpE, in the DNA replication of plasmids through activation of initiation proteins. The chain is Chaperone protein DnaJ from Rhizobium meliloti (strain 1021) (Ensifer meliloti).